A 136-amino-acid chain; its full sequence is Acyl carrier protein 1, chloroplastic (136 aa).

The N-terminal 52 residues, 1 to 52, are a transit peptide targeting the chloroplast; that stretch reads MASVTGTSISMASFKASLAPSRVSNLRSVSLPIKGKSFAPLRMRSARFVVCC. Residues 56-131 enclose the Carrier domain; that stretch reads PETVEKVCAI…DAADLIEKLI (76 aa). S91 carries the post-translational modification O-(pantetheine 4'-phosphoryl)serine.

Belongs to the acyl carrier protein (ACP) family. In terms of processing, 4'-phosphopantetheine is transferred from CoA to a specific serine of apo-ACP by acpS. This modification is essential for activity because fatty acids are bound in thioester linkage to the sulfhydryl of the prosthetic group.

The protein localises to the plastid. Its subcellular location is the chloroplast. It participates in lipid metabolism; fatty acid biosynthesis. In terms of biological role, carrier of the growing fatty acid chain in fatty acid biosynthesis. The protein is Acyl carrier protein 1, chloroplastic (ACP1) of Casuarina glauca (Swamp oak).